Reading from the N-terminus, the 305-residue chain is Sodium/potassium-transporting ATPase subunit beta-1 (305 aa).

The Cytoplasmic portion of the chain corresponds to 1-32 (MAREKSTDDGGGWKKFLWDSEKKQVLGRTGTS). The helical; Signal-anchor for type II membrane protein transmembrane segment at 33 to 53 (WFKIFVFYLIFYGCLAGIFIG) threads the bilayer. Residues 54-305 (TIQVMLLTIS…RFEVKIEVKS (252 aa)) are Extracellular-facing. A glycan (N-linked (GlcNAc...) asparagine) is linked at Asn-114. Cys-127 and Cys-150 are disulfide-bonded. Asn-159 carries an N-linked (GlcNAc...) asparagine glycan. Cys-160 and Cys-176 form a disulfide bridge. Asn-194 and Asn-267 each carry an N-linked (GlcNAc...) asparagine glycan. An intrachain disulfide couples Cys-215 to Cys-278.

Belongs to the X(+)/potassium ATPases subunit beta family. The sodium/potassium-transporting ATPase is composed of a catalytic alpha subunit, an auxiliary non-catalytic beta subunit and an additional regulatory subunit.

Its subcellular location is the cell membrane. In terms of biological role, this is the non-catalytic component of the active enzyme, which catalyzes the hydrolysis of ATP coupled with the exchange of Na(+) and K(+) ions across the plasma membrane. The beta subunit regulates, through assembly of alpha/beta heterodimers, the number of sodium pumps transported to the plasma membrane. The protein is Sodium/potassium-transporting ATPase subunit beta-1 (atp1b1) of Tetronarce californica (Pacific electric ray).